The sequence spans 91 residues: UPF0250 protein PP_4802 (91 aa).

This sequence belongs to the UPF0250 family.

The sequence is that of UPF0250 protein PP_4802 from Pseudomonas putida (strain ATCC 47054 / DSM 6125 / CFBP 8728 / NCIMB 11950 / KT2440).